The following is a 327-amino-acid chain: Acetyl-coenzyme A carboxylase carboxyl transferase subunit beta (327 aa).

The region spanning 24–293 is the CoA carboxyltransferase N-terminal domain; that stretch reads LWIKCPDTGQ…LTVTTAVEAP (270 aa). The span at 293–311 shows a compositional bias: low complexity; the sequence is PAEAAAKAEPEATTTEQPG. The tract at residues 293-327 is disordered; the sequence is PAEAAAKAEPEATTTEQPGAPAPTEPPAQPAAPQA. Residues 312–327 show a composition bias toward pro residues; the sequence is APAPTEPPAQPAAPQA.

Belongs to the AccD/PCCB family. As to quaternary structure, acetyl-CoA carboxylase is a heterohexamer composed of biotin carboxyl carrier protein (AccB), biotin carboxylase (AccC) and two subunits each of ACCase subunit alpha (AccA) and ACCase subunit beta (AccD).

Its subcellular location is the cytoplasm. It catalyses the reaction N(6)-carboxybiotinyl-L-lysyl-[protein] + acetyl-CoA = N(6)-biotinyl-L-lysyl-[protein] + malonyl-CoA. It functions in the pathway lipid metabolism; malonyl-CoA biosynthesis; malonyl-CoA from acetyl-CoA: step 1/1. Its function is as follows. Component of the acetyl coenzyme A carboxylase (ACC) complex. Biotin carboxylase (BC) catalyzes the carboxylation of biotin on its carrier protein (BCCP) and then the CO(2) group is transferred by the transcarboxylase to acetyl-CoA to form malonyl-CoA. This chain is Acetyl-coenzyme A carboxylase carboxyl transferase subunit beta, found in Rhodopseudomonas palustris (strain ATCC BAA-98 / CGA009).